A 163-amino-acid chain; its full sequence is MINNVVLVGRMTKDAELRYTPSQVAVATFTLAVNRTFKSQNGEREADFINCVIWRQPAENLANWAKKGALIGVTGRIQTRNYENQQGQRVYVTEVVADNFQMLESRATREGGSTGSFNGGFNNNTSSSNSYSAPAQQTPNFGRDDSPFGNSNPMDISDDDLPF.

Positions 1 to 104 (MINNVVLVGR…VVADNFQMLE (104 aa)) constitute an SSB domain. A disordered region spans residues 109 to 163 (REGGSTGSFNGGFNNNTSSSNSYSAPAQQTPNFGRDDSPFGNSNPMDISDDDLPF). The segment covering 119–130 (GGFNNNTSSSNS) has biased composition (low complexity). A compositionally biased stretch (polar residues) spans 131–140 (YSAPAQQTPN). The Important for interaction with partner proteins motif lies at 158-163 (DDDLPF).

Homotetramer.

Plays an important role in DNA replication, recombination and repair. Binds to ssDNA and to an array of partner proteins to recruit them to their sites of action during DNA metabolism. The polypeptide is Single-stranded DNA-binding protein 2 (ssb2) (Streptococcus pyogenes serotype M6 (strain ATCC BAA-946 / MGAS10394)).